The following is a 188-amino-acid chain: Large ribosomal subunit protein eL18B (188 aa).

Residues 153-188 (GKAPGTPHSRTKPYVLSKGRKFERARGRRASRGYKN) are disordered. The span at 178–188 (RGRRASRGYKN) shows a compositional bias: basic residues.

The protein belongs to the eukaryotic ribosomal protein eL18 family. Component of the large ribosomal subunit.

The protein resides in the cytoplasm. It localises to the cytosol. It is found in the rough endoplasmic reticulum. In terms of biological role, component of the large ribosomal subunit. The ribosome is a large ribonucleoprotein complex responsible for the synthesis of proteins in the cell. In Xenopus laevis (African clawed frog), this protein is Large ribosomal subunit protein eL18B (rpl18-b).